The sequence spans 708 residues: Leucine-rich repeat neuronal protein 3 (708 aa).

The signal sequence occupies residues 1–22; that stretch reads MKDMPLQIHVLLGLAITTLVQA. One can recognise an LRRNT domain in the interval 23–69; that stretch reads VDKKVDCPQLCTCEIRPWFTPTSIYMEASTVDCNDLGLLTFPARLPA. The Extracellular segment spans residues 23–628; it reads VDKKVDCPQL…KEYEKSNTTT (606 aa). LRR repeat units follow at residues 70–91, 93–114, 117–138, 141–162, 165–186, 189–210, 213–234, 237–258, 261–282, 285–304, 310–332, and 335–358; these read NTQI…TDFP, NLTG…NVKK, QLLS…CLSE, NLQE…AFIG, NLLR…WFDA, NLEI…NFKP, NLRS…ALVG, NLES…ALQK, NLKF…DFSN, HLKE…DSLA, DLRK…AFFR, and KLES…ESLP. N-linked (GlcNAc...) asparagine glycosylation is found at N93 and N103. N223 is a glycosylation site (N-linked (GlcNAc...) asparagine). In terms of domain architecture, LRRCT spans 368-421; the sequence is NPIRCDCVIRWINMNKTNIRFMEPDSLFCVDPPEFQGQNVRQVHFRDMMEICLP. N-linked (GlcNAc...) asparagine glycosylation occurs at N382. Residues 421–514 enclose the Ig-like C2-type domain; sequence PLIAPESFPS…DLKSVMIKVD (94 aa). Cysteines 444 and 496 form a disulfide. N-linked (GlcNAc...) asparagine glycosylation is found at N522, N579, N608, and N625. Residues 523 to 617 form the Fibronectin type-III domain; sequence GSLNIKIRDI…NVTTKGLDPD (95 aa). A helical membrane pass occupies residues 629–649; it reads LMACLGGLLGIIGVICLISCL. Residues 650–708 are Cytoplasmic-facing; it reads SPEMNCDGGHSYVRNYLQKPTFALGELYPPLINLWEAGKEKSTSLKVKATVIGLPTNMS.

Its subcellular location is the membrane. This is Leucine-rich repeat neuronal protein 3 (LRRN3) from Pongo abelii (Sumatran orangutan).